Here is a 350-residue protein sequence, read N- to C-terminus: Twinfilin-1 (350 aa).

Serine 2 is modified (N-acetylserine). The 138-residue stretch at 2 to 139 (SHQTGIQASE…SLHGYKKYLL (138 aa)) folds into the ADF-H 1 domain. Phosphoserine occurs at positions 143 and 277. Positions 175–313 (LQGVAFPISR…TADFLYEEVH (139 aa)) constitute an ADF-H 2 domain. Tyrosine 309 is subject to Phosphotyrosine. Residues 316–350 (QHAHKQSFAKPKGPAGKRGIRRLIRGPAETEATTD) are disordered. Threonine 349 bears the Phosphothreonine mark.

The protein belongs to the actin-binding proteins ADF family. Twinfilin subfamily. In terms of assembly, interacts with G-actin; ADP-actin form and capping protein (CP). May also be able to interact with TWF2 and phosphoinositides, PI(4,5)P2. When bound to PI(4,5)P2, it is down-regulated. Interacts with ACTG1. In terms of processing, phosphorylated on serine and threonine residues. In terms of tissue distribution, expressed at high levels in the colon, testis, ovary, prostate and lung. Expressed at lower levels in the brain, bladder and heart. Not detected in liver.

Its subcellular location is the cytoplasm. It localises to the cytoskeleton. Functionally, actin-binding protein involved in motile and morphological processes. Inhibits actin polymerization, likely by sequestering G-actin. By capping the barbed ends of filaments, it also regulates motility. Seems to play an important role in clathrin-mediated endocytosis and distribution of endocytic organelles. This Homo sapiens (Human) protein is Twinfilin-1 (TWF1).